Consider the following 234-residue polypeptide: Cell fusion protein dni1 (234 aa).

The signal sequence occupies residues methionine 1–serine 32. At serine 33–histidine 96 the chain is on the extracellular side. Residues proline 97–serine 117 traverse the membrane as a helical segment. Topologically, residues serine 118–arginine 132 are cytoplasmic. The chain crosses the membrane as a helical span at residues isoleucine 133–alanine 153. At valine 154–methionine 178 the chain is on the extracellular side. The chain crosses the membrane as a helical span at residues isoleucine 179 to leucine 199. Topologically, residues leucine 200 to tyrosine 234 are cytoplasmic.

It belongs to the SUR7 family.

It localises to the cell membrane. The protein resides in the cell tip. Cell membrane protein which plays a relevant role in coordinating membrane organization and cell wall remodeling during mating. The polypeptide is Cell fusion protein dni1 (dni1) (Schizosaccharomyces pombe (strain 972 / ATCC 24843) (Fission yeast)).